The chain runs to 101 residues: Gamma-secretase subunit PEN-2 (101 aa).

At M1–K17 the chain is on the cytoplasmic side. Residues Y18–W36 constitute an intramembrane region (helical). Topologically, residues F37 to V57 are cytoplasmic. The helical transmembrane segment at W58–F78 threads the bilayer. The Lumenal portion of the chain corresponds to Q79–P101.

This sequence belongs to the PEN-2 family. As to quaternary structure, the functional gamma-secretase complex is composed of at least four polypeptides: a presenilin homodimer (PSEN1 or PSEN2), nicastrin (NCSTN), APH1 (APH1A or APH1B) and PSENEN. Widely expressed. Expressed in leukocytes, lung, placenta, small intestine, liver, kidney, spleen thymus, skeletal muscle, heart and brain.

It localises to the endoplasmic reticulum membrane. It is found in the golgi apparatus. Its subcellular location is the golgi stack membrane. The protein resides in the cell membrane. The protein localises to the membrane. Its function is as follows. Essential subunit of the gamma-secretase complex, an endoprotease complex that catalyzes the intramembrane cleavage of integral membrane proteins such as Notch receptors and APP (amyloid-beta precursor protein). The gamma-secretase complex plays a role in Notch and Wnt signaling cascades and regulation of downstream processes via its role in processing key regulatory proteins, and by regulating cytosolic CTNNB1 levels. PSENEN modulates both endoproteolysis of presenilin and gamma-secretase activity. The chain is Gamma-secretase subunit PEN-2 (PSENEN) from Homo sapiens (Human).